Reading from the N-terminus, the 224-residue chain is Uracil-DNA glycosylase (224 aa).

The active-site Proton acceptor is Asp62.

Belongs to the uracil-DNA glycosylase (UDG) superfamily. UNG family.

It is found in the cytoplasm. It carries out the reaction Hydrolyzes single-stranded DNA or mismatched double-stranded DNA and polynucleotides, releasing free uracil.. In terms of biological role, excises uracil residues from the DNA which can arise as a result of misincorporation of dUMP residues by DNA polymerase or due to deamination of cytosine. The chain is Uracil-DNA glycosylase from Aliivibrio fischeri (strain ATCC 700601 / ES114) (Vibrio fischeri).